A 296-amino-acid chain; its full sequence is MNNNVFHFPVLLDAICKLIEDLPVKSDLIYIDSTLGEGAHAKAILEKYDFLSLVGIERDPQILERAKQFLFAFKGRITYFNDWFDNFFVNYPLNAKANFILVDLGISMFHYKGSKKGFSFLEDEPLDMRLCSSSCSISAADIVNTFSKYDLESLIYDLSNEHYSRRISKAIVEYRKIKRIETTKELQAVINKVYPFSKAKINPATKTFQALRICVNDELARLKRSLPLWIENLAKDGILAIITFHSIEDRIVKDFFRSLSCDLYAKISKKPIIPSFDEIKKNKPSRSAKLRALKKI.

S-adenosyl-L-methionine-binding positions include 38–40, Glu-57, Phe-80, Asp-103, and His-110; that span reads GAH.

This sequence belongs to the methyltransferase superfamily. RsmH family.

Its subcellular location is the cytoplasm. It carries out the reaction cytidine(1402) in 16S rRNA + S-adenosyl-L-methionine = N(4)-methylcytidine(1402) in 16S rRNA + S-adenosyl-L-homocysteine + H(+). Functionally, specifically methylates the N4 position of cytidine in position 1402 (C1402) of 16S rRNA. The sequence is that of Ribosomal RNA small subunit methyltransferase H from Borrelia garinii subsp. bavariensis (strain ATCC BAA-2496 / DSM 23469 / PBi) (Borreliella bavariensis).